The chain runs to 307 residues: Elongation factor Ts (307 aa).

The tract at residues 80-83 (TDFV) is involved in Mg(2+) ion dislocation from EF-Tu.

Belongs to the EF-Ts family.

The protein resides in the cytoplasm. Functionally, associates with the EF-Tu.GDP complex and induces the exchange of GDP to GTP. It remains bound to the aminoacyl-tRNA.EF-Tu.GTP complex up to the GTP hydrolysis stage on the ribosome. The polypeptide is Elongation factor Ts (Rhodospirillum centenum (strain ATCC 51521 / SW)).